The primary structure comprises 118 residues: MSITSLKNQKEFELINKLGKKFHERYFILVIAKNLPKIFLETKYNIFLGIKVSKKLNKKAVVRNKIKRRIRHLIRMNVSDSKLKAIKLAMIIIPRKGFEEINFSHLNDELSNIILKNI.

This sequence belongs to the RnpA family. Consists of a catalytic RNA component (M1 or rnpB) and a protein subunit.

The catalysed reaction is Endonucleolytic cleavage of RNA, removing 5'-extranucleotides from tRNA precursor.. Functionally, RNaseP catalyzes the removal of the 5'-leader sequence from pre-tRNA to produce the mature 5'-terminus. It can also cleave other RNA substrates such as 4.5S RNA. The protein component plays an auxiliary but essential role in vivo by binding to the 5'-leader sequence and broadening the substrate specificity of the ribozyme. The polypeptide is Ribonuclease P protein component (Rickettsia canadensis (strain McKiel)).